A 597-amino-acid polypeptide reads, in one-letter code: DDB1- and CUL4-associated factor 8 (597 aa).

Positions 1–24 (MSSKGSSTDGRTDLANGSLSSSPE) are enriched in polar residues. The disordered stretch occupies residues 1–147 (MSSKGSSTDG…DWVSSETSAL (147 aa)). Phosphoserine is present on residues serine 21 and serine 22. The Nuclear export signal signature appears at 39-50 (IEVEASDLSLSL). Residues 65-99 (RGTDTESSGEDKDSDSMEDTGHYSINDENRVHDRS) show a composition bias toward basic and acidic residues. At serine 99 the chain carries Phosphoserine. A compositionally biased stretch (acidic residues) spans 100-112 (EEEEEEEEEEEEE). Residues 114–122 (PRRRVQRKR) carry the Nuclear localization signal motif. Over residues 124 to 137 (NRDQDSSDDERALE) the composition is skewed to basic and acidic residues. Phosphoserine occurs at positions 129 and 130. WD repeat units follow at residues 191 to 230 (GHTG…PVLD), 234 to 275 (GHKS…CCKN), 281 to 321 (QHKG…PASK), 329 to 369 (EKKV…ENEN), 385 to 424 (ESKA…GAQY), 432 to 472 (RNNA…IIQF), and 476 to 515 (DKGG…STEL). Arginine 204 carries the post-translational modification Omega-N-methylarginine; by PRMT1. The tract at residues 558–597 (HRRWREPGVGATDADSDESPSSSDTSDEEEGPDRVQCMPS) is disordered.

Belongs to the WD repeat DCAF8 family. As to quaternary structure, interacts with DDB1, CUL4A and CUL4B. Interacts with KPNA1, KPNB1 and XPO1.

It is found in the nucleus. It localises to the cytoplasm. It participates in protein modification; protein ubiquitination. Functionally, may function as a substrate receptor for CUL4-DDB1 E3 ubiquitin-protein ligase complex. In Homo sapiens (Human), this protein is DDB1- and CUL4-associated factor 8 (DCAF8).